A 466-amino-acid chain; its full sequence is UDP-glycosyltransferase 91B1 (466 aa).

Residues Thr-286, 342–344, 359–367, and 381–384 contribute to the UDP-alpha-D-glucose site; these read VPQ, HCGWGSAVE, and NLDQ.

The protein belongs to the UDP-glycosyltransferase family.

The sequence is that of UDP-glycosyltransferase 91B1 (UGT91B1) from Arabidopsis thaliana (Mouse-ear cress).